We begin with the raw amino-acid sequence, 223 residues long: Glucosyl-3-phosphoglycerate phosphatase (223 aa).

Arg-10 contacts substrate. His-11 functions as the Tele-phosphohistidine intermediate in the catalytic mechanism. An Isoglutamyl lysine isopeptide (Lys-Gln) (interchain with Q-Cter in protein Pup) cross-link involves residue Lys-47. Arg-60 provides a ligand contact to substrate. Glu-84 acts as the Proton donor/acceptor in catalysis. Residue His-159 coordinates substrate.

Belongs to the phosphoglycerate mutase family. In terms of assembly, homodimer. Dimerization of the enzyme is essential for its dephosphorylation activity.

It carries out the reaction (2R)-2-O-(alpha-D-glucopyranosyl)-3-phospho-glycerate + H2O = (2R)-2-O-(alpha-D-glucopyranosyl)-glycerate + phosphate. The catalysed reaction is 2-O-(alpha-D-mannosyl)-3-phosphoglycerate + H2O = (2R)-2-O-(alpha-D-mannosyl)-glycerate + phosphate. It catalyses the reaction (2R)-2-O-[alpha-D-mannopyranosyl-(1-&gt;2)-alpha-D-glucopyranosyl]-3-phospho-glycerate + H2O = (2R)-2-O-[alpha-D-mannopyranosyl-(1-&gt;2)-alpha-D-glucopyranosyl]-glycerate + phosphate. Its activity is regulated as follows. Progressively inhibited by cobalt ions at concentrations between 10-50 mM and by copper ions at any concentration between 1-50 mM. Involved in the biosynthesis of mycobacterial methylglucose lipopolysaccharides (MGLPs). Catalyzes the dephosphorylation of glucosyl-3-phosphoglycerate (GPG) to glucosylglycerate (GG). GPG is the preferred substrate, but GpgP also exhibits low dephosphorylation activity on mannosyl-3-phosphoglycerate (MPG) and mannosylglucosyl-3-phosphoglycerate (MGPG) in vitro. Shows only trace of phosphoglycerate mutase (PGM) activity. This is Glucosyl-3-phosphoglycerate phosphatase from Mycobacterium tuberculosis (strain ATCC 25618 / H37Rv).